We begin with the raw amino-acid sequence, 251 residues long: 2,3-bisphosphoglycerate-dependent phosphoglycerate mutase 2 (251 aa).

Residues 8 to 15, 21 to 22, Arg-60, 87 to 90, Lys-98, 114 to 115, and 183 to 184 contribute to the substrate site; these read RHGESTWN, TG, ERHY, RR, and GN. The Tele-phosphohistidine intermediate role is filled by His-9. Glu-87 functions as the Proton donor/acceptor in the catalytic mechanism.

This sequence belongs to the phosphoglycerate mutase family. BPG-dependent PGAM subfamily. As to quaternary structure, homodimer.

It carries out the reaction (2R)-2-phosphoglycerate = (2R)-3-phosphoglycerate. Its pathway is carbohydrate degradation; glycolysis; pyruvate from D-glyceraldehyde 3-phosphate: step 3/5. In terms of biological role, catalyzes the interconversion of 2-phosphoglycerate and 3-phosphoglycerate. The protein is 2,3-bisphosphoglycerate-dependent phosphoglycerate mutase 2 of Nitrosospira multiformis (strain ATCC 25196 / NCIMB 11849 / C 71).